A 604-amino-acid chain; its full sequence is Aspartate--tRNA(Asp/Asn) ligase (604 aa).

Glu-175 is an L-aspartate binding site. The interval 199-202 is aspartate; that stretch reads QQFK. The L-aspartate site is built by Arg-221 and His-456. 221 to 223 lines the ATP pocket; that stretch reads RDE. Residue Glu-496 coordinates ATP. Arg-503 provides a ligand contact to L-aspartate. Residue 548–551 coordinates ATP; the sequence is GVDR.

The protein belongs to the class-II aminoacyl-tRNA synthetase family. Type 1 subfamily. Homodimer.

It localises to the cytoplasm. It catalyses the reaction tRNA(Asx) + L-aspartate + ATP = L-aspartyl-tRNA(Asx) + AMP + diphosphate. In terms of biological role, aspartyl-tRNA synthetase with relaxed tRNA specificity since it is able to aspartylate not only its cognate tRNA(Asp) but also tRNA(Asn). Reaction proceeds in two steps: L-aspartate is first activated by ATP to form Asp-AMP and then transferred to the acceptor end of tRNA(Asp/Asn). The sequence is that of Aspartate--tRNA(Asp/Asn) ligase from Methylorubrum populi (strain ATCC BAA-705 / NCIMB 13946 / BJ001) (Methylobacterium populi).